We begin with the raw amino-acid sequence, 142 residues long: Small ribosomal subunit protein uS12 (142 aa).

Belongs to the universal ribosomal protein uS12 family. As to quaternary structure, part of the 30S ribosomal subunit.

Its function is as follows. With S4 and S5 plays an important role in translational accuracy. Located at the interface of the 30S and 50S subunits. In Methanoregula boonei (strain DSM 21154 / JCM 14090 / 6A8), this protein is Small ribosomal subunit protein uS12.